The primary structure comprises 102 residues: Monothiol glutaredoxin-S5 (102 aa).

In terms of domain architecture, Glutaredoxin spans 1-101 (MENLQKMISE…PMLKRAGALW (101 aa)). Cys21 provides a ligand contact to [2Fe-2S] cluster. Positions 99–102 (ALWL) match the Responsive for interaction with TGA factors motif.

It belongs to the glutaredoxin family. CC-type subfamily.

The protein resides in the cytoplasm. Its subcellular location is the nucleus. Functionally, may only reduce GSH-thiol disulfides, but not protein disulfides. The protein is Monothiol glutaredoxin-S5 (GRXS5) of Arabidopsis thaliana (Mouse-ear cress).